Here is a 169-residue protein sequence, read N- to C-terminus: Dihydrofolate reductase type 8 (169 aa).

The DHFR domain maps to 3 to 169 (ELHAILAATA…FTYRKKELTE (167 aa)).

This sequence belongs to the dihydrofolate reductase family. As to quaternary structure, homodimer.

The catalysed reaction is (6S)-5,6,7,8-tetrahydrofolate + NADP(+) = 7,8-dihydrofolate + NADPH + H(+). It functions in the pathway cofactor biosynthesis; tetrahydrofolate biosynthesis; 5,6,7,8-tetrahydrofolate from 7,8-dihydrofolate: step 1/1. In terms of biological role, key enzyme in folate metabolism. Catalyzes an essential reaction for de novo glycine and purine synthesis, and for DNA precursor synthesis. The chain is Dihydrofolate reductase type 8 (dhfrVIII) from Escherichia coli.